Here is a 154-residue protein sequence, read N- to C-terminus: Ribosomal RNA large subunit methyltransferase H (154 aa).

S-adenosyl-L-methionine is bound by residues Leu-76, Gly-103, and 122-127; that span reads LSPLTL.

The protein belongs to the RNA methyltransferase RlmH family. As to quaternary structure, homodimer.

It localises to the cytoplasm. It carries out the reaction pseudouridine(1915) in 23S rRNA + S-adenosyl-L-methionine = N(3)-methylpseudouridine(1915) in 23S rRNA + S-adenosyl-L-homocysteine + H(+). Specifically methylates the pseudouridine at position 1915 (m3Psi1915) in 23S rRNA. This chain is Ribosomal RNA large subunit methyltransferase H, found in Wolinella succinogenes (strain ATCC 29543 / DSM 1740 / CCUG 13145 / JCM 31913 / LMG 7466 / NCTC 11488 / FDC 602W) (Vibrio succinogenes).